Consider the following 70-residue polypeptide: V-type proton ATPase subunit e1 (70 aa).

Transmembrane regions (helical) follow at residues methionine 1 to valine 21 and leucine 36 to alanine 56.

This sequence belongs to the V-ATPase e1/e2 subunit family. V-ATPase is a heteromultimeric enzyme composed of a peripheral catalytic V1 complex (components A to H) attached to an integral membrane V0 proton pore complex (components: a, c, c'', d and e).

The protein localises to the golgi apparatus. It localises to the trans-Golgi network membrane. In terms of biological role, subunit of the integral membrane V0 complex of vacuolar ATPase. V-ATPase is responsible for acidifying a variety of intracellular compartments in eukaryotic cells. This Arabidopsis thaliana (Mouse-ear cress) protein is V-type proton ATPase subunit e1 (VHA-e1).